Reading from the N-terminus, the 490-residue chain is Probable cytosol aminopeptidase (490 aa).

Mn(2+)-binding residues include lysine 262 and aspartate 267. Residue lysine 274 is part of the active site. Mn(2+) contacts are provided by aspartate 285, aspartate 344, and glutamate 346. Arginine 348 is a catalytic residue.

This sequence belongs to the peptidase M17 family. Mn(2+) is required as a cofactor.

The protein localises to the cytoplasm. It catalyses the reaction Release of an N-terminal amino acid, Xaa-|-Yaa-, in which Xaa is preferably Leu, but may be other amino acids including Pro although not Arg or Lys, and Yaa may be Pro. Amino acid amides and methyl esters are also readily hydrolyzed, but rates on arylamides are exceedingly low.. The catalysed reaction is Release of an N-terminal amino acid, preferentially leucine, but not glutamic or aspartic acids.. Its function is as follows. Presumably involved in the processing and regular turnover of intracellular proteins. Catalyzes the removal of unsubstituted N-terminal amino acids from various peptides. The chain is Probable cytosol aminopeptidase from Mannheimia succiniciproducens (strain KCTC 0769BP / MBEL55E).